We begin with the raw amino-acid sequence, 389 residues long: Chalcone synthase (389 aa).

Active-site residues include cysteine 164, histidine 303, and asparagine 336.

Belongs to the thiolase-like superfamily. Chalcone/stilbene synthases family. Homodimer. As to expression, mainly expressed in flowers, to a lower extent in young leaves, and barely in mature leaves and twigs.

The catalysed reaction is (E)-4-coumaroyl-CoA + 3 malonyl-CoA + 3 H(+) = 2',4,4',6'-tetrahydroxychalcone + 3 CO2 + 4 CoA. It functions in the pathway secondary metabolite biosynthesis; flavonoid biosynthesis. Functionally, the primary product of this enzyme is 4,2',4',6'-tetrahydroxychalcone (also termed naringenin-chalcone or chalcone) which can under specific conditions spontaneously isomerize into naringenin. The protein is Chalcone synthase of Rhododendron dauricum (Azalea daurica).